A 506-amino-acid polypeptide reads, in one-letter code: Gallate 1-beta-glucosyltransferase 84A23 (506 aa).

H20 acts as the Proton acceptor in catalysis. H20 contacts an anthocyanidin. Q345, H360, W363, N364, S365, and E368 together coordinate UDP-alpha-D-glucose. G383 is an an anthocyanidin binding site. UDP-alpha-D-glucose-binding residues include D384 and Q385.

It belongs to the UDP-glycosyltransferase family. In terms of tissue distribution, expressed in roots of the seedlings.

The protein resides in the cytoplasm. The catalysed reaction is 3,4,5-trihydroxybenzoate + UDP-alpha-D-glucose = 1-O-galloyl-beta-D-glucose + UDP. The enzyme catalyses 3,4-dihydroxybenzoate + UDP-alpha-D-glucose = 1-O-(3,4-dihydroxy-benzoyl)-beta-D-glucose + UDP. It carries out the reaction 4-hydroxybenzoate + UDP-alpha-D-glucose = 4-(beta-D-glucosyloxy)benzoate + UDP + H(+). It catalyses the reaction (E)-cinnamate + UDP-alpha-D-glucose = 1-O-(trans-cinnamoyl)-beta-D-glucose + UDP. The catalysed reaction is (E)-sinapate + UDP-alpha-D-glucose = 1-O-(trans-sinapoyl)-beta-D-glucose + UDP. The enzyme catalyses (E)-4-coumarate + UDP-alpha-D-glucose = 1-O-(trans-4-coumaroyl)-beta-D-glucose + UDP. It carries out the reaction (E)-caffeate + UDP-alpha-D-glucose = 1-O-[(E)-caffeoyl]-beta-D-glucose + UDP. It catalyses the reaction (E)-ferulate + UDP-alpha-D-glucose = 1-O-[(E)-feruloyl]-beta-D-glucose + UDP. The catalysed reaction is genistein + UDP-alpha-D-glucose = genistein 7-O-beta-D-glucoside + UDP + H(+). The enzyme catalyses apigenin + UDP-alpha-D-glucose = apigenin 7-O-beta-D-glucoside + UDP + H(+). It carries out the reaction luteolin + UDP-alpha-D-glucose = luteolin 7-O-beta-D-glucoside + UDP + H(+). In terms of biological role, glucosyltransferase that catalyzes the formation of 1-O-beta-D-glucose esters with hydroxybenzoic acids and cinnamic acid including its derivatives as preferred glucosyl acceptors. Has significant activity with gallic acid (3,4,5-trihydroxybenzoic acid), 3,4-dihydroxybenzoic acid, 4-hydroxybenzoic acid, cinnamic acid, sinapic acid, coumaric acid, caffeic acid and ferulic acid in vitro. Gallic acid is the predicted native substrate of the enzyme, which thus catalyzes the formation of 1-O-galloyl-beta-D-glucose, the first committed step of hydrolyzable tannins (HTs) biosynthesis, with punicalagin isomers being the major HTs of pomegranate. Catalyzes the formation of flavonoid glucosides with genistein, apigenin and luteolin in vitro. Has low activity with benzoic acid, 2-hydroxybenzoic acid, 3-hydroxybenzoic acid, 2,4-dihydroxybenzoic acid, naringenin and quercetin. No activity with catechol, resveratrol, chlorogenic acid, catechin and epicatechin (building blocks of proanthocyanidins) or cyanidin, delphinidin and pelargonidin (the three anthocyanidins). This Punica granatum (Pomegranate) protein is Gallate 1-beta-glucosyltransferase 84A23.